The primary structure comprises 75 residues: Penaeidin-3k (75 aa).

The first 19 residues, 1-19, serve as a signal peptide directing secretion; sequence MRLVVCLVFLASFALVCQG. Q20 carries the post-translational modification Pyrrolidone carboxylic acid. 3 disulfide bridges follow: C44–C59, C48–C66, and C60–C67. Residue S74 is modified to Serine amide.

This sequence belongs to the penaeidin family.

The protein resides in the cytoplasmic granule. In terms of biological role, antibacterial and antifungal activity. Presents chitin-binding activity. This chain is Penaeidin-3k, found in Penaeus setiferus (Atlantic white shrimp).